The sequence spans 658 residues: Probable replication factor A 73 kDa subunit (658 aa).

2 disordered regions span residues 134–155 and 169–222; these read PEVK…RPNI and SEFQ…TERG. The segment at residues 236–326 is a DNA-binding region (OB); that stretch reads FRIHGMVSRK…TLRNDSVVEA (91 aa). The C4-type zinc-finger motif lies at 518 to 539; that stretch reads CASEGCQKKVIESDGEYRCEKC.

Belongs to the replication factor A protein 1 family. In terms of assembly, component of the heterotrimeric canonical replication protein A complex (RPA).

The protein resides in the nucleus. In terms of biological role, as part of the heterotrimeric replication protein A complex (RPA/RP-A), binds and stabilizes single-stranded DNA intermediates, that form during DNA replication or upon DNA stress. It prevents their reannealing and in parallel, recruits and activates different proteins and complexes involved in DNA metabolism. Thereby, it plays an essential role both in DNA replication and the cellular response to DNA damage. This Caenorhabditis briggsae protein is Probable replication factor A 73 kDa subunit.